The following is a 169-amino-acid chain: Secreted LysM effector Blys5 (169 aa).

The N-terminal stretch at 1–19 is a signal peptide; the sequence is MKLSVISAVFVSLAAAAAA. LysM domains follow at residues 47–94 and 121–167; these read TYYQ…YYCV and QWYK…NVCV.

This sequence belongs to the secreted LysM effector family.

Secreted effector that enables the plant pathogenic fungus to manipulate host defenses for successful infection. Required for the full virulence to infect insect hosts. Protects fungal hyphae against the hydrolytic activity of chitinase and plays an important role in evasion of insect immunities. Binds chitin and can additionally bind chitosan and cellulose. Coats and protects the cell walls of insect pathogens from host cell recognition and additionally shields fungal cells from the hydrolysis of insect chitinases. This is Secreted LysM effector Blys5 from Beauveria bassiana (strain ARSEF 2860) (White muscardine disease fungus).